A 460-amino-acid chain; its full sequence is Cysteine--tRNA ligase (460 aa).

Residue cysteine 29 participates in Zn(2+) binding. The 'HIGH' region motif lies at 31 to 41; it reads ATPQSSPHIGH. Residues cysteine 212, histidine 237, and glutamate 241 each coordinate Zn(2+). A 'KMSKS' region motif is present at residues 268 to 272; that stretch reads KMSKS. Lysine 271 is a binding site for ATP.

Belongs to the class-I aminoacyl-tRNA synthetase family. Monomer. Zn(2+) is required as a cofactor.

The protein resides in the cytoplasm. It carries out the reaction tRNA(Cys) + L-cysteine + ATP = L-cysteinyl-tRNA(Cys) + AMP + diphosphate. The protein is Cysteine--tRNA ligase of Corynebacterium glutamicum (strain ATCC 13032 / DSM 20300 / JCM 1318 / BCRC 11384 / CCUG 27702 / LMG 3730 / NBRC 12168 / NCIMB 10025 / NRRL B-2784 / 534).